A 342-amino-acid polypeptide reads, in one-letter code: Dysbindin (342 aa).

A Phosphoserine modification is found at Ser-11. The stretch at 83-180 forms a coiled coil; the sequence is LSAHWEKKQA…AELDAEHSQK (98 aa). The Nuclear export signal motif lies at 243 to 256; the sequence is LMDISDQEALDVFL. The tract at residues 263–342 is disordered; that stretch reads NTLLSPISGP…ATLHSDDSDS (80 aa). Residues 286–305 are compositionally biased toward low complexity; that stretch reads PTPSQAPATPPSSSSPGTDP. Phosphoserine occurs at positions 316, 321, and 340.

Belongs to the dysbindin family. In terms of assembly, interacts (via its coiled coil domain) with KXD1. Interacts with CMYA5, PI4K2 and RNF151. Component of the biogenesis of lysosome-related organelles complex 1 (BLOC-1) composed of at least BLOC1S1, BLOC1S2, BLOC1S3, BLOC1S4, BLOC1S5, BLOC1S6, DTNBP1/BLOC1S7 and SNAPIN/BLOC1S8. Interacts directly in the complex with BLOC1S5, BLOC1S6 and SNAPIN/BLOC1S8. The BLOC-1 complex associates with the AP-3 protein complex and membrane protein cargos. This BLOC-1 complex also associates with the BLOC-2 complex in endosomes. Binds to DTNA and DTNB but may not be a physiological binding partner. Interacts with the DNA-dependent protein kinase complex DNA-PK; the interaction phosphorylates DTNBP1 in vitro. Interacts directly in this complex with XRCC5 and XRCC6. Interacts with AP3M1, AP3B2 and TRIM32. Interacts with XPO1; the interaction exports DTNBP1 out of the nucleus. Ubiquitinated by TRIM32. Ubiquitination leads to DTNBP1 degradation.

The protein localises to the cytoplasm. It localises to the cytoplasmic vesicle membrane. It is found in the cytoplasmic vesicle. Its subcellular location is the secretory vesicle. The protein resides in the synaptic vesicle membrane. The protein localises to the endosome membrane. It localises to the melanosome membrane. It is found in the nucleus. Its subcellular location is the postsynaptic density. The protein resides in the presynaptic cell membrane. The protein localises to the endoplasmic reticulum. Component of the BLOC-1 complex, a complex that is required for normal biogenesis of lysosome-related organelles (LRO), such as platelet dense granules and melanosomes. In concert with the AP-3 complex, the BLOC-1 complex is required to target membrane protein cargos into vesicles assembled at cell bodies for delivery into neurites and nerve terminals. The BLOC-1 complex, in association with SNARE proteins, is also proposed to be involved in neurite extension. Associates with the BLOC-2 complex to facilitate the transport of TYRP1 independent of AP-3 function. Plays a role in synaptic vesicle trafficking and in neurotransmitter release. Plays a role in the regulation of cell surface exposure of DRD2. May play a role in actin cytoskeleton reorganization and neurite outgrowth. May modulate MAPK8 phosphorylation. Appears to promote neuronal transmission and viability through regulating the expression of SNAP25 and SYN1, modulating PI3-kinase-Akt signaling and influencing glutamatergic release. Regulates the expression of SYN1 through binding to its promoter. Modulates prefrontal cortical activity via the dopamine/D2 pathway. The protein is Dysbindin (DTNBP1) of Bos taurus (Bovine).